A 299-amino-acid chain; its full sequence is UDP-N-acetylenolpyruvoylglucosamine reductase (299 aa).

The FAD-binding PCMH-type domain occupies 19–192 (LGGQALAEVR…AAVTLQLRRS (174 aa)). The active site involves Arg-169. Residue Cys-221 is the Proton donor of the active site. Glu-292 is a catalytic residue.

The protein belongs to the MurB family. Requires FAD as cofactor.

The protein resides in the cytoplasm. It carries out the reaction UDP-N-acetyl-alpha-D-muramate + NADP(+) = UDP-N-acetyl-3-O-(1-carboxyvinyl)-alpha-D-glucosamine + NADPH + H(+). Its pathway is cell wall biogenesis; peptidoglycan biosynthesis. In terms of biological role, cell wall formation. The protein is UDP-N-acetylenolpyruvoylglucosamine reductase of Oleidesulfovibrio alaskensis (strain ATCC BAA-1058 / DSM 17464 / G20) (Desulfovibrio alaskensis).